Consider the following 188-residue polypeptide: Putative nucleotidase OB0422 (188 aa).

Belongs to the 5'(3')-deoxyribonucleotidase family.

The polypeptide is Putative nucleotidase OB0422 (Oceanobacillus iheyensis (strain DSM 14371 / CIP 107618 / JCM 11309 / KCTC 3954 / HTE831)).